A 1024-amino-acid polypeptide reads, in one-letter code: Eukaryotic translation initiation factor 3 subunit A (1024 aa).

Residues 331–508 (VISSNAPGTG…QAITFQDDVF (178 aa)) form the PCI domain. 2 coiled-coil regions span residues 575–717 (AAED…REEA) and 777–889 (KRRG…RRSR). Basic and acidic residues-rich tracts occupy residues 797-866 (KERR…ERRA) and 873-886 (DKQR…EANR). Disordered regions lie at residues 797-973 (KERR…GAYR) and 1001-1024 (AAAA…GRRA). Composition is skewed to low complexity over residues 890-906 (AAGT…AADA) and 946-971 (KEAA…SSGA).

Belongs to the eIF-3 subunit A family. Component of the eukaryotic translation initiation factor 3 (eIF-3) complex.

The protein localises to the cytoplasm. RNA-binding component of the eukaryotic translation initiation factor 3 (eIF-3) complex, which is involved in protein synthesis of a specialized repertoire of mRNAs and, together with other initiation factors, stimulates binding of mRNA and methionyl-tRNAi to the 40S ribosome. The eIF-3 complex specifically targets and initiates translation of a subset of mRNAs involved in cell proliferation. The sequence is that of Eukaryotic translation initiation factor 3 subunit A from Mycosarcoma maydis (Corn smut fungus).